Consider the following 555-residue polypeptide: Wee1-like protein kinase 2-A (555 aa).

Disordered regions lie at residues methionine 1–alanine 81 and phenylalanine 149–threonine 175. Residues serine 38–cysteine 48 are compositionally biased toward polar residues. The span at serine 68–serine 78 shows a compositional bias: low complexity. Over residues phenylalanine 149–glutamine 160 the composition is skewed to polar residues. Residues phenylalanine 210–leucine 480 enclose the Protein kinase domain. ATP is bound by residues isoleucine 216–valine 224 and lysine 239. Residue aspartate 337 is the Proton acceptor of the active site. Mg(2+)-binding residues include asparagine 342 and aspartate 374. Positions alanine 487–leucine 513 form a coiled coil. Residue serine 549 is modified to Phosphoserine.

This sequence belongs to the protein kinase superfamily. Ser/Thr protein kinase family. WEE1 subfamily. In terms of assembly, interacts with prmt5; this promotes protesomal degradation of wee2-a in the nucleus. The interaction with prmt5 is disrupted upon activation of the DNA replication checkpoint. Post-translationally, subject to proteasomal degradation in the nucleus. As to expression, detected in egg (at protein level). Oocyte-specific maternally supplied protein. Present in immature and mature oocytes and in early (pregastrula) embryos, but not in post-gastrula embryos.

The protein resides in the nucleus. It is found in the cytoplasm. Its subcellular location is the cytosol. It carries out the reaction L-tyrosyl-[protein] + ATP = O-phospho-L-tyrosyl-[protein] + ADP + H(+). Its function is as follows. Oocyte-specific protein tyrosine kinase that phosphorylates and inhibits cdk1 and acts as a key regulator of meiosis. Required to maintain meiotic arrest in oocytes by phosphorylating cdk1 at 'Tyr-15', which inhibits cdk1 activity and prevents meiotic reentry. Negative regulator of mitosis. Involved in the mitotic DNA replication checkpoint. This chain is Wee1-like protein kinase 2-A (wee2-a), found in Xenopus laevis (African clawed frog).